A 474-amino-acid polypeptide reads, in one-letter code: ATP synthase subunit beta (474 aa).

152–159 is a binding site for ATP; sequence GGAGVGKT.

Belongs to the ATPase alpha/beta chains family. In terms of assembly, F-type ATPases have 2 components, CF(1) - the catalytic core - and CF(0) - the membrane proton channel. CF(1) has five subunits: alpha(3), beta(3), gamma(1), delta(1), epsilon(1). CF(0) has three main subunits: a(1), b(2) and c(9-12). The alpha and beta chains form an alternating ring which encloses part of the gamma chain. CF(1) is attached to CF(0) by a central stalk formed by the gamma and epsilon chains, while a peripheral stalk is formed by the delta and b chains.

It is found in the cell inner membrane. The catalysed reaction is ATP + H2O + 4 H(+)(in) = ADP + phosphate + 5 H(+)(out). Produces ATP from ADP in the presence of a proton gradient across the membrane. The catalytic sites are hosted primarily by the beta subunits. This Magnetococcus marinus (strain ATCC BAA-1437 / JCM 17883 / MC-1) protein is ATP synthase subunit beta.